We begin with the raw amino-acid sequence, 309 residues long: Beta-ketoacyl-[acyl-carrier-protein] synthase III (309 aa).

Active-site residues include cysteine 111 and histidine 236. An ACP-binding region spans residues 237-241; that stretch reads QANVR. Asparagine 266 is an active-site residue.

Belongs to the thiolase-like superfamily. FabH family. Homodimer.

The protein localises to the cytoplasm. The enzyme catalyses malonyl-[ACP] + acetyl-CoA + H(+) = 3-oxobutanoyl-[ACP] + CO2 + CoA. It functions in the pathway lipid metabolism; fatty acid biosynthesis. Catalyzes the condensation reaction of fatty acid synthesis by the addition to an acyl acceptor of two carbons from malonyl-ACP. Catalyzes the first condensation reaction which initiates fatty acid synthesis and may therefore play a role in governing the total rate of fatty acid production. Possesses both acetoacetyl-ACP synthase and acetyl transacylase activities. Its substrate specificity determines the biosynthesis of branched-chain and/or straight-chain of fatty acids. The protein is Beta-ketoacyl-[acyl-carrier-protein] synthase III of Aquifex aeolicus (strain VF5).